The primary structure comprises 189 residues: Elongation factor P (189 aa).

Lys-34 carries the N6-(3,6-diaminohexanoyl)-5-hydroxylysine modification.

This sequence belongs to the elongation factor P family. Post-translationally, may be beta-lysylated on the epsilon-amino group of Lys-34 by the combined action of EpmA and EpmB, and then hydroxylated on the C5 position of the same residue by EpmC (if this protein is present). Lysylation is critical for the stimulatory effect of EF-P on peptide-bond formation. The lysylation moiety may extend toward the peptidyltransferase center and stabilize the terminal 3-CCA end of the tRNA. Hydroxylation of the C5 position on Lys-34 may allow additional potential stabilizing hydrogen-bond interactions with the P-tRNA.

The protein resides in the cytoplasm. The protein operates within protein biosynthesis; polypeptide chain elongation. In terms of biological role, involved in peptide bond synthesis. Alleviates ribosome stalling that occurs when 3 or more consecutive Pro residues or the sequence PPG is present in a protein, possibly by augmenting the peptidyl transferase activity of the ribosome. Modification of Lys-34 is required for alleviation. The chain is Elongation factor P from Idiomarina loihiensis (strain ATCC BAA-735 / DSM 15497 / L2-TR).